The following is an 833-amino-acid chain: V-type proton ATPase 116 kDa subunit a 4 (833 aa).

The Cytoplasmic portion of the chain corresponds to 1–390 (MASVFRSEEM…DAYGVGSYRE (390 aa)). The helical transmembrane segment at 391 to 409 (INPAPYTIITFPFLFAVMF) threads the bilayer. Over 410-411 (GD) the chain is Vacuolar. A helical transmembrane segment spans residues 412 to 428 (CGHGMVMLMAALWMVLN). The Cytoplasmic segment spans residues 429–443 (ERHLLAQKSTNEMWN). A helical transmembrane segment spans residues 444–473 (IFFNGRYLILLMGIFSIYTGLIYNDCFSKS). The Vacuolar portion of the chain corresponds to 474–538 (FNIFGSSWSV…ASNKLTFLNS (65 aa)). The helical transmembrane segment at 539–558 (YKMKMSVILGIAHMIFGVIL) threads the bilayer. At 559–576 (SLFNHIYFRRTLNIILQF) the chain is on the cytoplasmic side. A helical transmembrane segment spans residues 577–597 (IPEMIFMLSLFGYLVFMIIFK). Topologically, residues 598–642 (WCRYDAHTSRKAPSILIHFIGMFLFDYDDSSNAPLYGHQQEVQTF) are vacuolar. The chain crosses the membrane as a helical span at residues 643–662 (FVIIALVSVPWMLLIKPFVL). At 663–720 (RAKHQKSQLQSFTIHEDAVEGDHSGHSSKKTAGAHGMKDGHEEEFNFGDIFVHQAIHT) the chain is on the cytoplasmic side. A disordered region spans residues 681 to 700 (VEGDHSGHSSKKTAGAHGMK). The chain crosses the membrane as a helical span at residues 721-745 (IEYCLGCISNTASYLRLWALSLAHA). Residues 746 to 766 (ELSEVLWTMVMSIGLRLQGWA) lie on the Vacuolar side of the membrane. The chain crosses the membrane as a helical span at residues 767 to 805 (GLVGVFIIFAVFAVLTVAILLVMEGLSAFLHALRLHWVE). Residues 806-833 (FQNKFYEGAGSKFSPFSFKHVLEGTAEE) lie on the Cytoplasmic side of the membrane.

This sequence belongs to the V-ATPase 116 kDa subunit family. As to quaternary structure, V-ATPase is a heteromultimeric enzyme made up of two complexes: the ATP-hydrolytic V1 complex and the proton translocation V0 complex. The V1 complex consists of three catalytic AB heterodimers that form a heterohexamer, three peripheral stalks each consisting of EG heterodimers, one central rotor including subunits D and F, and the regulatory subunits C and H. The proton translocation complex V0 consists of the proton transport subunit a, a ring of proteolipid subunits c9c'', rotary subunit d, subunits e and f, and the accessory subunits ATP6AP1/Ac45 and ATP6AP2/PRR. Interacts with the V1 complex V-ATPase subunit A ATP6V1A. Interacts with the V0 complex V-ATPase subunit c ATP6V0C. As to expression, specifically expressed in kidney, but not in the heart, brain, spleen, lung, liver, muscle, or testis. Distribution within the kidney appears more widespread than that seen in man. High intensity staining at the surface of intercalated cells, with additional expression in the proximal tubule.

It is found in the apical cell membrane. The protein resides in the basolateral cell membrane. Subunit of the V0 complex of vacuolar(H+)-ATPase (V-ATPase), a multisubunit enzyme composed of a peripheral complex (V1) that hydrolyzes ATP and a membrane integral complex (V0) that translocates protons. V-ATPase is responsible for acidifying and maintaining the pH of intracellular compartments and in some cell types, is targeted to the plasma membrane, where it is responsible for acidifying the extracellular environment. Involved in normal vectorial acid transport into the urine by the kidney. This Mus musculus (Mouse) protein is V-type proton ATPase 116 kDa subunit a 4 (Atp6v0a4).